We begin with the raw amino-acid sequence, 390 residues long: Chorismate synthase (390 aa).

R48 and R54 together coordinate NADP(+). Residues 125 to 127, 238 to 239, G278, 293 to 297, and R319 contribute to the FMN site; these read RSS, NA, and KPTSS. Positions 360–390 are disordered; sequence KVPGNIINPTNPVTTQPDVRRAEDPEPDENS. A compositionally biased stretch (polar residues) spans 366–376; the sequence is INPTNPVTTQP.

Belongs to the chorismate synthase family. In terms of assembly, homotetramer. The cofactor is FMNH2.

It catalyses the reaction 5-O-(1-carboxyvinyl)-3-phosphoshikimate = chorismate + phosphate. Its pathway is metabolic intermediate biosynthesis; chorismate biosynthesis; chorismate from D-erythrose 4-phosphate and phosphoenolpyruvate: step 7/7. In terms of biological role, catalyzes the anti-1,4-elimination of the C-3 phosphate and the C-6 proR hydrogen from 5-enolpyruvylshikimate-3-phosphate (EPSP) to yield chorismate, which is the branch point compound that serves as the starting substrate for the three terminal pathways of aromatic amino acid biosynthesis. This reaction introduces a second double bond into the aromatic ring system. This chain is Chorismate synthase, found in Nitrosomonas eutropha (strain DSM 101675 / C91 / Nm57).